The sequence spans 777 residues: MDSKESLTPGREENPSSVLAQERGNVMDFYKTLRGGATVKVSASSPSLAVASQSDSKQRRLLVDFPKGSVSNAQQPDLSKAVSLSMGLYMGETETKVMGNDLGFPQQGQISLSSGETDLKLLEESIANLNRSTSVPENPKSSASTAVSAAPTEKEFPKTHSDISSEQQHLKGQTGTNGGNVKLYTTDQSTFDILQDLEFSSGSPGKETNESPWRSDLLIDENCLLSPLAGEDDSFLLEGNSNEDCKPLILPDTKPKIKDNGDLVLSSPSNVTLPQVKTEKEDFIELCTPGVIKQEKLGTVYCQAGFPGANIIGNKMSAISVHGVSTSGGQMYHYDMNTASLSQQQDQKPIFNVIPPIPVGSENWNRCQGSGDDNLTSLGTLNFPGRTVFSNGYSSPSMRPDVSSPPSSSSTATTGPPPKLCLVCSDEASGCHYGVLTCGSCKVFFKRAVEGQHNYLCAGRNDCIIDKIRRKNCPACRYRKCLQAGMNLEARKTKKKIKGIQQATTGVSQETPENPANKTIVPATLPQLTPTLVSLLEVIEPEVLYAGYDSSVPDSTWRIMTTLNMLGGRQVIAAVKWAKAIPGFRNLHLDDQMTLLQYSWMFLMAFALGWRSYRQSSANLLCFAPDLIINEQRMTLPCMYDQCKHMLYVSSELHRLQVSYEEYLCMKTLLLLSSVPKDGLKSQELFDEIRMTYIKELGKAIVKREGNSSQNWQRFYQLTKLLDSMHEVVENLLNYCFQTFLDKTMSIEFPEMLAEIITNQIPKYSNGNIKKLLFHQK.

Basic and acidic residues predominate over residues 1 to 14; sequence MDSKESLTPGREEN. Positions 1-23 are disordered; the sequence is MDSKESLTPGREENPSSVLAQER. Positions 1–420 are modulating; sequence MDSKESLTPG…TATTGPPPKL (420 aa). At T8 the chain carries Phosphothreonine. The residue at position 23 (R23) is an Omega-N-methylarginine. A phosphoserine mark is found at S45, S113, S134, and S141. A compositionally biased stretch (polar residues) spans 130 to 140; that stretch reads NRSTSVPENPK. The interval 130 to 183 is disordered; that stretch reads NRSTSVPENPKSSASTAVSAAPTEKEFPKTHSDISSEQQHLKGQTGTNGGNVKL. Over residues 141–150 the composition is skewed to low complexity; that stretch reads SSASTAVSAA. Residues 152-163 show a composition bias toward basic and acidic residues; that stretch reads TEKEFPKTHSDI. The segment covering 164 to 174 has biased composition (polar residues); that stretch reads SSEQQHLKGQT. 3 positions are modified to phosphoserine: S203, S211, and S226. K258 is covalently cross-linked (Glycyl lysine isopeptide (Lys-Gly) (interchain with G-Cter in SUMO2)). Phosphoserine is present on S267. Residues K277 and K293 each participate in a glycyl lysine isopeptide (Lys-Gly) (interchain with G-Cter in SUMO); alternate cross-link. Residues K277 and K293 each participate in a glycyl lysine isopeptide (Lys-Gly) (interchain with G-Cter in SUMO2); alternate cross-link. Low complexity predominate over residues 394–414; the sequence is SSPSMRPDVSSPPSSSSTATT. Residues 394–415 form a disordered region; that stretch reads SSPSMRPDVSSPPSSSSTATTG. S404 is modified (phosphoserine). K419 participates in a covalent cross-link: Glycyl lysine isopeptide (Lys-Gly) (interchain with G-Cter in ubiquitin). NR C4-type zinc fingers lie at residues 421-441 and 457-476; these read CLVC…CGSC and CAGR…CPAC. Residues 421-486 constitute a DNA-binding region (nuclear receptor); sequence CLVCSDEASG…RYRKCLQAGM (66 aa). N6-acetyllysine occurs at positions 480, 492, 494, and 495. An interaction with CLOCK region spans residues 485–777; the sequence is GMNLEARKTK…NIKKLLFHQK (293 aa). The segment at 487–523 is hinge; that stretch reads NLEARKTKKKIKGIQQATTGVSQETPENPANKTIVPA. The NR LBD domain occupies 524-758; sequence TLPQLTPTLV…FPEMLAEIIT (235 aa). The interaction with CRY1 stretch occupies residues 532 to 697; the sequence is LVSLLEVIEP…EIRMTYIKEL (166 aa). K703 participates in a covalent cross-link: Glycyl lysine isopeptide (Lys-Gly) (interchain with G-Cter in SUMO).

It belongs to the nuclear hormone receptor family. NR3 subfamily. Heteromultimeric cytoplasmic complex with HSP90AA1, HSPA1A/HSPA1B, and FKBP5 or another immunophilin such as PPID, STIP1, or the immunophilin homolog PPP5C. Upon ligand binding FKBP5 dissociates from the complex and FKBP4 takes its place, thereby linking the complex to dynein and mediating transport to the nucleus, where the complex dissociates. Probably forms a complex composed of chaperones HSP90 and HSP70, co-chaperones CDC37, PPP5C, TSC1 and client protein TSC2, CDK4, AKT, RAF1 and NR3C1; this complex does not contain co-chaperones STIP1/HOP and PTGES3/p23. Directly interacts with UNC45A. Binds to DNA as a homodimer, and as heterodimer with NR3C2 or the retinoid X receptor. Binds STAT5A and STAT5B homodimers and heterodimers. Interacts with NRIP1, POU2F1, POU2F2 and TRIM28. Interacts with several coactivator complexes, including the SMARCA4 complex, CREBBP/EP300, TADA2L (Ada complex) and p160 coactivators such as NCOA2 and NCOA6. Interaction with BAG1 inhibits transactivation. Interacts with HEXIM1 and TGFB1I1. Interacts with NCOA1. Interacts with NCOA3, SMARCA4, SMARCC1, SMARCD1, and SMARCE1. Interacts with CLOCK, CRY1 and CRY2 in a ligand-dependent fashion. Interacts with CIART. Interacts with RWDD3. Interacts with UBE2I/UBC9 and this interaction is enhanced in the presence of RWDD3. Interacts with GRIP1. Interacts with NR4A3 (via nuclear receptor DNA-binding domain), represses transcription activity of NR4A3 on the POMC promoter Nur response element (NurRE). Directly interacts with PNRC2 to attract and form a complex with UPF1 and DCP1A; the interaction leads to rapid mRNA degradation. Interacts with GSK3B. Interacts with FNIP1 and FNIP2. Interacts (via C-terminus) with HNRNPU (via C-terminus). Interacts with MCM3AP. Interacts (via domain NR LBD) with HSP90AA1 and HSP90AB1. In the absence of hormonal ligand, interacts with TACC1. Interacts (via NR LBD domain) with ZNF764 (via KRAB domain); the interaction regulates transcription factor activity of NR3C1 by directing its actions toward certain biologic pathways. In terms of processing, acetylation by CLOCK reduces its binding to glucocorticoid response elements and its transcriptional activity. Increased proteasome-mediated degradation in response to glucocorticoids. Post-translationally, phosphorylated in the absence of hormone; becomes hyperphosphorylated in the presence of glucocorticoid. The Ser-203, Ser-226 and Ser-404-phosphorylated forms are mainly cytoplasmic, and the Ser-211-phosphorylated form is nuclear. Phosphorylation at Ser-211 increases transcriptional activity. Phosphorylation at Ser-203, Ser-226 and Ser-404 decreases signaling capacity. Phosphorylation at Ser-404 may protect from glucocorticoid-induced apoptosis. Phosphorylation at Ser-203 and Ser-211 is not required in regulation of chromosome segregation. May be dephosphorylated by PPP5C, attenuates NR3C1 action. In terms of processing, ubiquitinated by UBR5, leading to its degradation: UBR5 specifically recognizes and binds ligand-bound NR3C1 when it is not associated with coactivators (NCOAs). In presence of NCOAs, the UBR5-degron is not accessible, preventing its ubiquitination and degradation. Sumoylation at Lys-277 and Lys-293 negatively regulates its transcriptional activity. Sumoylation at Lys-703 positively regulates its transcriptional activity in the presence of RWDD3. Sumoylation at Lys-277 and Lys-293 is dispensable whereas sumoylation at Lys-703 is critical for the stimulatory effect of RWDD3 on its transcriptional activity. Heat shock increases sumoylation in a RWDD3-dependent manner.

It localises to the cytoplasm. Its subcellular location is the nucleus. The protein resides in the mitochondrion. The protein localises to the cytoskeleton. It is found in the spindle. It localises to the microtubule organizing center. Its subcellular location is the centrosome. The protein resides in the chromosome. The protein localises to the nucleoplasm. Receptor for glucocorticoids (GC). Has a dual mode of action: as a transcription factor that binds to glucocorticoid response elements (GRE), both for nuclear and mitochondrial DNA, and as a modulator of other transcription factors. Affects inflammatory responses, cellular proliferation and differentiation in target tissues. Involved in chromatin remodeling. Plays a role in rapid mRNA degradation by binding to the 5' UTR of target mRNAs and interacting with PNRC2 in a ligand-dependent manner which recruits the RNA helicase UPF1 and the mRNA-decapping enzyme DCP1A, leading to RNA decay. Could act as a coactivator for STAT5-dependent transcription upon growth hormone (GH) stimulation and could reveal an essential role of hepatic GR in the control of body growth. Mediates glucocorticoid-induced apoptosis. Promotes accurate chromosome segregation during mitosis. May act as a tumor suppressor. May play a negative role in adipogenesis through the regulation of lipolytic and antilipogenic gene expression. The chain is Glucocorticoid receptor (NR3C1) from Pongo abelii (Sumatran orangutan).